The chain runs to 149 residues: Alpha-crystallin A chain (149 aa).

A sHSP domain is found at 41–149 (LFRSVLESGI…DPTHSERPIP (109 aa)). Zn(2+) contacts are provided by His-89, Glu-91, His-96, and His-143.

This sequence belongs to the small heat shock protein (HSP20) family. As to quaternary structure, heteropolymer composed of three CRYAA and one CRYAB subunits. Inter-subunit bridging via zinc ions enhances stability, which is crucial as there is no protein turn over in the lens. Can also form homodimers and homotetramers (dimers of dimers) which serve as the building blocks of homooligomers. Within homooligomers, the zinc-binding motif is created from residues of 3 different molecules. His-89 and Glu-91 from one molecule are ligands of the zinc ion, and His-96 and His-143 residues from additional molecules complete the site with tetrahedral coordination geometry.

The protein resides in the cytoplasm. It is found in the nucleus. Its function is as follows. Contributes to the transparency and refractive index of the lens. May act as a chaperone, preventing aggregation of various proteins under a wide range of stress conditions. The chain is Alpha-crystallin A chain (CRYAA) from Anas platyrhynchos (Mallard).